Here is a 450-residue protein sequence, read N- to C-terminus: Phosphoglucosamine mutase (450 aa).

S102 (phosphoserine intermediate) is an active-site residue. Mg(2+) contacts are provided by S102, D244, D246, and D248. At S102 the chain carries Phosphoserine.

The protein belongs to the phosphohexose mutase family. Mg(2+) is required as a cofactor. Post-translationally, activated by phosphorylation.

The enzyme catalyses alpha-D-glucosamine 1-phosphate = D-glucosamine 6-phosphate. Catalyzes the conversion of glucosamine-6-phosphate to glucosamine-1-phosphate. In Bartonella bacilliformis (strain ATCC 35685 / KC583 / Herrer 020/F12,63), this protein is Phosphoglucosamine mutase.